A 226-amino-acid polypeptide reads, in one-letter code: Large ribosomal subunit protein uL1 (226 aa).

It belongs to the universal ribosomal protein uL1 family. As to quaternary structure, part of the 50S ribosomal subunit.

Functionally, binds directly to 23S rRNA. The L1 stalk is quite mobile in the ribosome, and is involved in E site tRNA release. In terms of biological role, protein L1 is also a translational repressor protein, it controls the translation of the L11 operon by binding to its mRNA. The polypeptide is Large ribosomal subunit protein uL1 (Mycoplasma pneumoniae (strain ATCC 29342 / M129 / Subtype 1) (Mycoplasmoides pneumoniae)).